The chain runs to 606 residues: Leucine-rich repeat and immunoglobulin-like domain-containing nogo receptor-interacting protein 2 (606 aa).

The signal sequence occupies residues methionine 1–glycine 27. The 30-residue stretch at cysteine 28–isoleucine 57 folds into the LRRNT domain. Residues cysteine 28–threonine 545 are Extracellular-facing. Asparagine 38 carries N-linked (GlcNAc...) asparagine glycosylation. 12 LRR repeats span residues glutamate 58–serine 79, leucine 82–asparagine 103, asparagine 106–glycine 127, asparagine 130–aspartate 151, asparagine 154–glycine 175, serine 178–histidine 199, serine 202–arginine 223, histidine 226–tyrosine 247, asparagine 250–histidine 271, tyrosine 274–aspartate 295, arginine 298–glycine 319, and phenylalanine 322–serine 343. An N-linked (GlcNAc...) asparagine glycan is attached at asparagine 130. Asparagine 188 carries an N-linked (GlcNAc...) asparagine glycan. N-linked (GlcNAc...) asparagine glycosylation is found at asparagine 250, asparagine 260, and asparagine 279. Asparagine 327 carries an N-linked (GlcNAc...) asparagine glycan. The region spanning asparagine 355–lysine 409 is the LRRCT domain. An intrachain disulfide couples cysteine 432 to cysteine 483. Residues asparagine 491, asparagine 522, and asparagine 527 are each glycosylated (N-linked (GlcNAc...) asparagine). The chain crosses the membrane as a helical span at residues alanine 546–tryptophan 566. At serine 567–isoleucine 606 the chain is on the cytoplasmic side.

It localises to the membrane. The sequence is that of Leucine-rich repeat and immunoglobulin-like domain-containing nogo receptor-interacting protein 2 (Lingo2) from Mus musculus (Mouse).